The following is a 1237-amino-acid chain: Anion exchange protein 2 (1237 aa).

The segment at 1 to 237 is disordered; sequence MSSAPRRPAS…SYNLQERRRI (237 aa). Topologically, residues 1-703 are cytoplasmic; it reads MSSAPRRPAS…SDFRDALDPQ (703 aa). Basic and acidic residues-rich tracts occupy residues 37–49 and 58–75; these read ELHR…RFEE and GGEE…EYHR. Composition is skewed to basic residues over residues 76-85 and 94-110; these read QSSHHIHHPL and RRRK…RRRP. The residue at position 113 (Ser113) is a Phosphoserine. Residues 122–133 show a composition bias toward acidic residues; sequence EEGEEDEEEANE. Positions 137-151 are enriched in low complexity; that stretch reads ARAPTEPSPASTPSS. Phosphoserine occurs at positions 144, 170, and 172. Over residues 206-215 the composition is skewed to gly residues; sequence TAGGDNGGAS. Phosphoserine is present on Ser239. Thr253 carries the post-translational modification Phosphothreonine. The residue at position 270 (Lys270) is an N6-methyllysine. The disordered stretch occupies residues 281–316; sequence RRHLVRKNAKGSAQSSREGREPGPTPRSRPRAPHKP. The residue at position 439 (Ser439) is a Phosphoserine. The tract at residues 445 to 464 is disordered; that stretch reads SLLGHHHGQGAESDPHVTEP. 4 helical membrane passes run 704-727, 733-770, 790-812, and 822-843; these read CVAA…GLLG, LIGV…LLVF, VWIG…SFLV, and IFAF…IKIF. Residues 704-1237 are membrane (anion exchange); that stretch reads CVAAVIFIYF…DEYNEMPMPV (534 aa). The Extracellular portion of the chain corresponds to 844 to 896; sequence QEHPLHGCSVSNSSETDSSENATWAGAGSTLGPANRSSAGQAGQGRPRGQPNT. N-linked (GlcNAc...) asparagine glycosylation is found at Asn855, Asn864, and Asn878. The chain crosses the membrane as a helical span at residues 897-914; it reads ALLSLVLMAGTFFIAFFL. At 915 to 929 the chain is on the cytoplasmic side; the sequence is RKFKNSRFFPGRIRR. Helical transmembrane passes span 930–950, 984–1006, 1032–1053, 1087–1132, and 1159–1195; these read VIGD…DYSI, PFPV…LIFM, LLLI…LAAA, VTGL…IQFY, and MHLF…TVPL. A lipid anchor (S-palmitoyl cysteine) is attached at Cys1169.

The protein belongs to the anion exchanger (TC 2.A.31) family. Expressed in the ileum (at protein level).

The protein localises to the cell membrane. The protein resides in the apical cell membrane. It localises to the basolateral cell membrane. It carries out the reaction hydrogencarbonate(in) + chloride(out) = hydrogencarbonate(out) + chloride(in). In terms of biological role, sodium-independent anion exchanger which mediates the electroneutral exchange of chloride for bicarbonate ions across the cell membrane. Plays an important role in osteoclast differentiation and function. Regulates bone resorption and calpain-dependent actin cytoskeleton organization in osteoclasts via anion exchange-dependent control of pH. Essential for intracellular pH regulation in CD8(+) T-cells upon CD3 stimulation, modulating CD8(+) T-cell response. This chain is Anion exchange protein 2 (SLC4A2), found in Oryctolagus cuniculus (Rabbit).